The sequence spans 343 residues: Uroporphyrinogen decarboxylase (343 aa).

Residues 26 to 30 (RQAGR), aspartate 75, tyrosine 150, serine 205, and histidine 319 contribute to the substrate site.

Belongs to the uroporphyrinogen decarboxylase family. In terms of assembly, homodimer.

The protein resides in the cytoplasm. The catalysed reaction is uroporphyrinogen III + 4 H(+) = coproporphyrinogen III + 4 CO2. It functions in the pathway porphyrin-containing compound metabolism; protoporphyrin-IX biosynthesis; coproporphyrinogen-III from 5-aminolevulinate: step 4/4. Functionally, catalyzes the decarboxylation of four acetate groups of uroporphyrinogen-III to yield coproporphyrinogen-III. The protein is Uroporphyrinogen decarboxylase of Syntrophotalea carbinolica (strain DSM 2380 / NBRC 103641 / GraBd1) (Pelobacter carbinolicus).